A 534-amino-acid chain; its full sequence is Prolyl 4-hydroxylase subunit alpha-1 (534 aa).

A signal peptide spans 1–17; it reads MIWGVLMMGILLPQCSA. Residue Asn113 is glycosylated (N-linked (GlcNAc...) asparagine). One copy of the TPR repeat lies at 205–238; the sequence is VSVLDYLSYAVYQQGDLDKALLLTKKLLELDPEH. Asn259 is a glycosylation site (N-linked (GlcNAc...) asparagine). Positions 411-519 constitute a Fe2OG dioxygenase domain; it reads TAEELQVANY…KWVSNKWLHE (109 aa). Fe cation contacts are provided by His429, Asp431, and His500. Lys510 serves as a coordination point for 2-oxoglutarate.

This sequence belongs to the P4HA family. Heterotetramer of two alpha-1 chains and two beta chains (P4HB)(the beta chain is the multi-functional PDI), where P4HB plays the role of a structural subunit; this tetramer catalyzes the formation of 4-hydroxyproline in collagen. Fe(2+) serves as cofactor. L-ascorbate is required as a cofactor.

It localises to the endoplasmic reticulum lumen. The catalysed reaction is L-prolyl-[collagen] + 2-oxoglutarate + O2 = trans-4-hydroxy-L-prolyl-[collagen] + succinate + CO2. Catalyzes the post-translational formation of 4-hydroxyproline in -Xaa-Pro-Gly- sequences in collagens and other proteins. The protein is Prolyl 4-hydroxylase subunit alpha-1 (P4ha1) of Rattus norvegicus (Rat).